The following is a 352-amino-acid chain: Protein RecA (352 aa).

67–74 (GPESSGKT) lines the ATP pocket.

This sequence belongs to the RecA family.

It localises to the cytoplasm. Can catalyze the hydrolysis of ATP in the presence of single-stranded DNA, the ATP-dependent uptake of single-stranded DNA by duplex DNA, and the ATP-dependent hybridization of homologous single-stranded DNAs. It interacts with LexA causing its activation and leading to its autocatalytic cleavage. The sequence is that of Protein RecA from Chlamydia trachomatis serovar L2 (strain ATCC VR-902B / DSM 19102 / 434/Bu).